The primary structure comprises 267 residues: Glucosamine-6-phosphate deaminase (267 aa).

Residue Asp-72 is the Proton acceptor; for enolization step of the active site. The active-site For ring-opening step is the Asp-141. The active-site Proton acceptor; for ring-opening step is the His-143. Catalysis depends on Glu-148, which acts as the For ring-opening step.

This sequence belongs to the glucosamine/galactosamine-6-phosphate isomerase family. NagB subfamily.

The catalysed reaction is alpha-D-glucosamine 6-phosphate + H2O = beta-D-fructose 6-phosphate + NH4(+). It functions in the pathway amino-sugar metabolism; N-acetylneuraminate degradation; D-fructose 6-phosphate from N-acetylneuraminate: step 5/5. Allosterically activated by N-acetylglucosamine 6-phosphate (GlcNAc6P). Its function is as follows. Catalyzes the reversible isomerization-deamination of glucosamine 6-phosphate (GlcN6P) to form fructose 6-phosphate (Fru6P) and ammonium ion. This chain is Glucosamine-6-phosphate deaminase, found in Borrelia hermsii (strain HS1 / DAH).